The following is a 63-amino-acid chain: ATP synthase subunit epsilon, mitochondrial (63 aa).

In terms of assembly, F-type ATP synthases have 2 components, the catalytic core F(1) and the membrane-embedded component F(0), linked together by a central stalk and a peripheral stalk. The central stalk, also called rotor shaft, is often seen as part of F(1). The peripheral stalk is seen as part of F(0). F(0) contains the membrane channel next to the rotor. F-type ATP synthases form dimers but each monomer functions independently in ATP generation. The dimer consists of 18 different polypeptides: ATP1 (subunit alpha, part of F(1), 3 molecules per monomer), ATP2 (subunit beta, part of F(1), 3 molecules per monomer), ATP3 (subunit gamma, part of the central stalk), ATP4 (subunit b, part of the peripheral stalk), ATP5/OSCP (subunit 5/OSCP, part of the peripheral stalk), ATP6 (subunit a, part of the peripheral stalk), ATP7 (subunit d, part of the peripheral stalk), ATP8 (subunit 8, part of the peripheral stalk), OLI1 (subunit c, part of the rotor, 10 molecules per monomer), ATP14 (subunit h, part of the peripheral stalk), ATP15 (subunit epsilon, part of the central stalk), ATP16 (subunit delta, part of the central stalk), ATP17 (subunit f, part of the peripheral stalk), ATP18 (subunit i/j, part of the peripheral stalk). Dimer-specific subunits are ATP19 (subunit k, at interface between monomers), ATP20 (subunit g, at interface between monomers), TIM11 (subunit e, at interface between monomers). Also contains subunit L.

Its subcellular location is the mitochondrion inner membrane. Functionally, mitochondrial membrane ATP synthase (F(1)F(0) ATP synthase or Complex V) produces ATP from ADP in the presence of a proton gradient across the membrane which is generated by electron transport complexes of the respiratory chain. F-type ATP synthases consist of two structural domains, F(1) - containing the extramembraneous catalytic core, and F(0) - containing the membrane proton channel, linked together by a central stalk and a peripheral stalk. During catalysis, ATP synthesis in the catalytic domain of F(1) is coupled via a rotary mechanism of the central stalk subunits to proton translocation. Part of the complex F(1) domain and the central stalk which is part of the complex rotary element. Rotation of the central stalk against the surrounding alpha/ATP1(3)beta/ATP2(3) subunits leads to hydrolysis of ATP in three separate catalytic sites on the beta/ATP2 subunits. This chain is ATP synthase subunit epsilon, mitochondrial, found in Pichia angusta (Yeast).